The chain runs to 440 residues: Enolase (440 aa).

Q163 contacts (2R)-2-phosphoglycerate. E205 functions as the Proton donor in the catalytic mechanism. 3 residues coordinate Mg(2+): D242, E288, and D315. (2R)-2-phosphoglycerate is bound by residues K340, R369, S370, and K391. K340 acts as the Proton acceptor in catalysis.

Belongs to the enolase family. The cofactor is Mg(2+).

It is found in the cytoplasm. Its subcellular location is the secreted. It localises to the cell surface. The catalysed reaction is (2R)-2-phosphoglycerate = phosphoenolpyruvate + H2O. Its pathway is carbohydrate degradation; glycolysis; pyruvate from D-glyceraldehyde 3-phosphate: step 4/5. In terms of biological role, catalyzes the reversible conversion of 2-phosphoglycerate (2-PG) into phosphoenolpyruvate (PEP). It is essential for the degradation of carbohydrates via glycolysis. The chain is Enolase from Limosilactobacillus fermentum (strain NBRC 3956 / LMG 18251) (Lactobacillus fermentum).